We begin with the raw amino-acid sequence, 403 residues long: Argininosuccinate synthase (403 aa).

An ATP-binding site is contributed by 9 to 17 (AYSGGLDTS). An L-citrulline-binding site is contributed by Y86. G116 is an ATP binding site. Residues T118, N122, and D123 each contribute to the L-aspartate site. Position 122 (N122) interacts with L-citrulline. Positions 126, 174, 259, and 271 each coordinate L-citrulline.

The protein belongs to the argininosuccinate synthase family. Type 1 subfamily. As to quaternary structure, homotetramer.

The protein resides in the cytoplasm. It catalyses the reaction L-citrulline + L-aspartate + ATP = 2-(N(omega)-L-arginino)succinate + AMP + diphosphate + H(+). It functions in the pathway amino-acid biosynthesis; L-arginine biosynthesis; L-arginine from L-ornithine and carbamoyl phosphate: step 2/3. This chain is Argininosuccinate synthase, found in Ligilactobacillus salivarius (strain UCC118) (Lactobacillus salivarius).